A 188-amino-acid polypeptide reads, in one-letter code: Putative manganese efflux pump MntP (188 aa).

The next 6 helical transmembrane spans lie at 3–23 (MITL…VALG), 39–59 (LGWH…LAGL), 65–85 (IETY…GKMI), 104–124 (GMSL…VGLS), 125–145 (LAIV…IAGV), and 167–187 (IAGG…HTLG).

The protein belongs to the MntP (TC 9.B.29) family.

It is found in the cell inner membrane. Its function is as follows. Probably functions as a manganese efflux pump. The protein is Putative manganese efflux pump MntP of Syntrophotalea carbinolica (strain DSM 2380 / NBRC 103641 / GraBd1) (Pelobacter carbinolicus).